A 384-amino-acid chain; its full sequence is 3,7-dimethylxanthine N-methyltransferase 2 (384 aa).

Positions 18, 61, 66, 100, 101, 139, 140, and 156 each coordinate S-adenosyl-L-homocysteine. Tyrosine 157 provides a ligand contact to theobromine. Cysteine 158 lines the S-adenosyl-L-homocysteine pocket. Theobromine is bound by residues histidine 160 and tryptophan 161. A Mg(2+)-binding site is contributed by asparagine 178. Theobromine is bound at residue serine 237. Residues aspartate 260, phenylalanine 262, and asparagine 263 each contribute to the Mg(2+) site. Theobromine is bound at residue tyrosine 368.

Belongs to the methyltransferase superfamily. Type-7 methyltransferase family. Mg(2+) is required as a cofactor. In terms of tissue distribution, highly expressed in developing endosperm. Detected in young leaves and flower buds. Present in immature fruits (grains), but barely in mature fruits.

The enzyme catalyses 7-methylxanthine + S-adenosyl-L-methionine = theobromine + S-adenosyl-L-homocysteine + H(+). It catalyses the reaction theobromine + S-adenosyl-L-methionine = caffeine + S-adenosyl-L-homocysteine + H(+). It carries out the reaction 1,7-dimethylxanthine + S-adenosyl-L-methionine = caffeine + S-adenosyl-L-homocysteine + H(+). It participates in alkaloid biosynthesis. Functionally, involved in the biosynthesis of caffeine. Catalyzes the conversion of 7-methylxanthine (7mX) to theobromine and of theobromine to caffeine. Has 1-N-methylation activity. The chain is 3,7-dimethylxanthine N-methyltransferase 2 from Coffea arabica (Arabian coffee).